The sequence spans 377 residues: Chaperone protein DnaJ (377 aa).

The J domain maps to 5 to 69 (DYYEVLGVSK…NKRANYDQFG (65 aa)). Residues 134 to 216 (GTEKEISIRK…CHGKGTETKN (83 aa)) form a CR-type zinc finger. Residues Cys-147, Cys-150, Cys-164, Cys-167, Cys-190, Cys-193, Cys-204, and Cys-207 each contribute to the Zn(2+) site. 4 CXXCXGXG motif repeats span residues 147 to 154 (CETCDGSG), 164 to 171 (CHYCNGSG), 190 to 197 (CPVCNGTG), and 204 to 211 (CPTCHGKG).

Belongs to the DnaJ family. In terms of assembly, homodimer. It depends on Zn(2+) as a cofactor.

The protein localises to the cytoplasm. In terms of biological role, participates actively in the response to hyperosmotic and heat shock by preventing the aggregation of stress-denatured proteins and by disaggregating proteins, also in an autonomous, DnaK-independent fashion. Unfolded proteins bind initially to DnaJ; upon interaction with the DnaJ-bound protein, DnaK hydrolyzes its bound ATP, resulting in the formation of a stable complex. GrpE releases ADP from DnaK; ATP binding to DnaK triggers the release of the substrate protein, thus completing the reaction cycle. Several rounds of ATP-dependent interactions between DnaJ, DnaK and GrpE are required for fully efficient folding. Also involved, together with DnaK and GrpE, in the DNA replication of plasmids through activation of initiation proteins. This Staphylococcus carnosus (strain TM300) protein is Chaperone protein DnaJ.